A 270-amino-acid chain; its full sequence is Mlc titration factor A (270 aa).

Residues His-111, His-148, His-152, and Glu-211 each contribute to the Zn(2+) site.

This sequence belongs to the MtfA family. Interacts with Mlc. Requires Zn(2+) as cofactor.

It localises to the cytoplasm. Its function is as follows. Involved in the modulation of the activity of the glucose-phosphotransferase system (glucose-PTS). Interacts with the transcriptional repressor Mlc, preventing its interaction with DNA and leading to the modulation of expression of genes regulated by Mlc, including ptsG, which encodes the PTS system glucose-specific EIICB component. Functionally, shows zinc-dependent metallopeptidase activity. This is Mlc titration factor A from Yersinia pestis bv. Antiqua (strain Nepal516).